We begin with the raw amino-acid sequence, 47 residues long: Delta-stichotoxin-Hcr3a (47 aa).

P3 is subject to Hydroxyproline. 3 cysteine pairs are disulfide-bonded: C4–C44, C6–C34, and C27–C45.

Belongs to the sea anemone sodium channel inhibitory toxin family. Type I subfamily.

It localises to the secreted. The protein localises to the nematocyst. Functionally, inhibits voltage-gated sodium channels (Nav). The sequence is that of Delta-stichotoxin-Hcr3a from Radianthus crispa (Leathery sea anemone).